The chain runs to 252 residues: MTRAGFVAGNWKMYGNLVQNQELLAAIVLGIPSLQNASCAVCVPYPYLAQAQSVLKGTHVAWGGQNISQHHQGAYTGEVSAGMLTDFGCRYVIVGHSERRTLYGEDNQMVAEKFHSAQEQSLVPILCVGETLAQREANETEQVIARQLDAVIGLVGVNAIKQSVIAYEPVWAIGTGETATPQQAQDVHAFVRNRIAAHNSEIAADIQIVYGGSVKANNASELFAMPDIDGGLIGGASLVAAEFISICFAAQS.

Substrate is bound at residue 10-12 (NWK). H96 acts as the Electrophile in catalysis. Residue E168 is the Proton acceptor of the active site. Substrate-binding positions include G174, S213, and 234 to 235 (GG).

It belongs to the triosephosphate isomerase family. Homodimer.

Its subcellular location is the cytoplasm. It carries out the reaction D-glyceraldehyde 3-phosphate = dihydroxyacetone phosphate. Its pathway is carbohydrate biosynthesis; gluconeogenesis. It functions in the pathway carbohydrate degradation; glycolysis; D-glyceraldehyde 3-phosphate from glycerone phosphate: step 1/1. Functionally, involved in the gluconeogenesis. Catalyzes stereospecifically the conversion of dihydroxyacetone phosphate (DHAP) to D-glyceraldehyde-3-phosphate (G3P). This chain is Triosephosphate isomerase, found in Nitrosomonas eutropha (strain DSM 101675 / C91 / Nm57).